We begin with the raw amino-acid sequence, 304 residues long: 2-phospho-L-lactate transferase (304 aa).

Asp-49 contacts 7,8-didemethyl-8-hydroxy-5-deazariboflavin.

This sequence belongs to the CofD family. In terms of assembly, homodimer. The cofactor is Mg(2+).

The catalysed reaction is (2S)-lactyl-2-diphospho-5'-guanosine + 7,8-didemethyl-8-hydroxy-5-deazariboflavin = oxidized coenzyme F420-0 + GMP + H(+). It participates in cofactor biosynthesis; coenzyme F420 biosynthesis. Its function is as follows. Catalyzes the transfer of the 2-phospholactate moiety from (2S)-lactyl-2-diphospho-5'-guanosine to 7,8-didemethyl-8-hydroxy-5-deazariboflavin (FO) with the formation of oxidized coenzyme F420-0 and GMP. The polypeptide is 2-phospho-L-lactate transferase (Methanocorpusculum labreanum (strain ATCC 43576 / DSM 4855 / Z)).